The sequence spans 702 residues: Methionine--tRNA ligase (702 aa).

The 'HIGH' region motif lies at 14 to 24 (PYANGPVHLGH). The Zn(2+) site is built by C146, C149, C159, and C162. Residues 344-348 (KFSKS) carry the 'KMSKS' region motif. Residue K347 participates in ATP binding. In terms of domain architecture, tRNA-binding spans 601–702 (DFQKVDLRVA…GEKINGQSVQ (102 aa)).

Belongs to the class-I aminoacyl-tRNA synthetase family. MetG type 1 subfamily. As to quaternary structure, homodimer. The cofactor is Zn(2+).

It localises to the cytoplasm. The catalysed reaction is tRNA(Met) + L-methionine + ATP = L-methionyl-tRNA(Met) + AMP + diphosphate. Is required not only for elongation of protein synthesis but also for the initiation of all mRNA translation through initiator tRNA(fMet) aminoacylation. The polypeptide is Methionine--tRNA ligase (Chlorobium luteolum (strain DSM 273 / BCRC 81028 / 2530) (Pelodictyon luteolum)).